A 580-amino-acid chain; its full sequence is TRAF-type zinc finger domain-containing protein 1 (580 aa).

N-acetylalanine is present on Ala-2. The TRAF-type zinc finger occupies 27–103 (IHEIHCQRNI…DLELSVVKLK (77 aa)). Residues Ser-278, Ser-320, Ser-326, Ser-327, Ser-409, Ser-415, Ser-430, Ser-450, Ser-469, and Ser-532 each carry the phosphoserine modification. Disordered regions lie at residues 395–453 (TANH…SPNR), 468–509 (PSGP…ASGH), and 524–580 (FAPS…EEEE). Over residues 407 to 417 (QDSQPENTSAE) the composition is skewed to polar residues.

As to quaternary structure, interacts with MAVS, TICAM1, TRAF1, TRAF2, TRAF3 and TRAF6. As to expression, expressed in skeletal muscle, brain, liver, kidney, spleen and bone marrow. Expression depends on STAT1.

Negative feedback regulator that controls excessive innate immune responses. Regulates both Toll-like receptor 4 (TLR4) and DDX58/RIG1-like helicases (RLH) pathways. May inhibit the LTR pathway by direct interaction with TRAF6 and attenuation of NF-kappa-B activation. May negatively regulate the RLH pathway downstream from MAVS and upstream of NF-kappa-B and IRF3. In Mus musculus (Mouse), this protein is TRAF-type zinc finger domain-containing protein 1 (Trafd1).